The following is a 581-amino-acid chain: Trehalase (581 aa).

It belongs to the glycosyl hydrolase 15 family. As to quaternary structure, monomer.

It carries out the reaction alpha,alpha-trehalose + H2O = alpha-D-glucose + beta-D-glucose. Its pathway is glycan degradation; trehalose degradation; D-glucose from alpha,alpha-trehalose: step 1/1. With respect to regulation, inhibited by validamycin A. Its function is as follows. Catalyzes the hydrolysis of alpha,alpha-trehalose into two molecules of D-glucose. This Thermoplasma acidophilum (strain ATCC 25905 / DSM 1728 / JCM 9062 / NBRC 15155 / AMRC-C165) protein is Trehalase.